We begin with the raw amino-acid sequence, 410 residues long: Probable serine/threonine-protein kinase PBL9 (410 aa).

Gly2 is lipidated: N-myristoyl glycine. Residue Cys4 is the site of S-palmitoyl cysteine attachment. The interval 11–46 (AESSGASTKYDAKDIGSLGSKASSVSVRPSPRTEGE) is disordered. The Protein kinase domain maps to 68–352 (FRPDSVLGEG…MSEVVSHLEH (285 aa)). Residues 74–82 (LGEGGFGCV) and Lys106 contribute to the ATP site. A Phosphotyrosine modification is found at Tyr151. Asp203 serves as the catalytic Proton acceptor. Phosphoserine occurs at positions 207 and 237. A phosphothreonine mark is found at Thr238 and Thr243. Tyr251 carries the phosphotyrosine modification.

It belongs to the protein kinase superfamily. Ser/Thr protein kinase family. As to quaternary structure, interacts with the Xanthomonas campestris effector XopAC/AvrAC. As to expression, expressed in stomatal guard cells of leaves.

Its subcellular location is the cell membrane. The catalysed reaction is L-seryl-[protein] + ATP = O-phospho-L-seryl-[protein] + ADP + H(+). It carries out the reaction L-threonyl-[protein] + ATP = O-phospho-L-threonyl-[protein] + ADP + H(+). Possible bi-functional kinase. In vitro, it exhibits serine/threonine activity. In vivo, can phosphorylate tyrosine residues of limited substrates. May be involved in plant defense signaling. In Arabidopsis thaliana (Mouse-ear cress), this protein is Probable serine/threonine-protein kinase PBL9.